Consider the following 83-residue polypeptide: Small ribosomal subunit protein eS27 (83 aa).

The C4-type zinc-finger motif lies at cysteine 37–cysteine 59.

This sequence belongs to the eukaryotic ribosomal protein eS27 family. The cofactor is Zn(2+).

This chain is Small ribosomal subunit protein eS27 (rps-27), found in Caenorhabditis elegans.